The primary structure comprises 162 residues: Photosystem II extrinsic protein V (162 aa).

The signal sequence occupies residues 1 to 26; that stretch reads MFNKNFWTSIIIGCLFCTITYSGVNA. Residues C62, C65, H66, and H117 each contribute to the heme c site.

The protein belongs to the cytochrome c family. PsbV subfamily. In terms of assembly, PSII is composed of 1 copy each of membrane proteins PsbA, PsbB, PsbC, PsbD, PsbE, PsbF, PsbH, PsbI, PsbJ, PsbK, PsbL, PsbM, PsbT, PsbX, PsbY, PsbZ, Psb30/Ycf12, at least 3 peripheral proteins of the oxygen-evolving complex and a large number of cofactors. It forms dimeric complexes. Heme c serves as cofactor.

Its subcellular location is the plastid. It localises to the cyanelle thylakoid membrane. Functionally, one of the extrinsic, lumenal subunits of photosystem II (PSII). PSII is a light-driven water plastoquinone oxidoreductase, using light energy to abstract electrons from H(2)O, generating a proton gradient subsequently used for ATP formation. The extrinsic proteins stabilize the structure of photosystem II oxygen-evolving complex (OEC), the ion environment of oxygen evolution and protect the OEC against heat-induced inactivation. In Cyanophora paradoxa, this protein is Photosystem II extrinsic protein V.